The following is a 227-amino-acid chain: ATP-dependent dethiobiotin synthetase BioD (227 aa).

Position 13-18 (Asp-13–Thr-18) interacts with ATP. Thr-17 lines the Mg(2+) pocket. Residue Lys-38 is part of the active site. ATP-binding positions include Asp-55, Glu-118 to Gly-121, Asn-178 to Arg-179, Pro-207 to Ile-209, and Glu-214. Residues Asp-55 and Glu-118 each coordinate Mg(2+).

Belongs to the dethiobiotin synthetase family. Homodimer. It depends on Mg(2+) as a cofactor.

It is found in the cytoplasm. It catalyses the reaction (7R,8S)-7,8-diammoniononanoate + CO2 + ATP = (4R,5S)-dethiobiotin + ADP + phosphate + 3 H(+). It participates in cofactor biosynthesis; biotin biosynthesis; biotin from 7,8-diaminononanoate: step 1/2. In terms of biological role, catalyzes a mechanistically unusual reaction, the ATP-dependent insertion of CO2 between the N7 and N8 nitrogen atoms of 7,8-diaminopelargonic acid (DAPA, also called 7,8-diammoniononanoate) to form a ureido ring. The protein is ATP-dependent dethiobiotin synthetase BioD of Tolumonas auensis (strain DSM 9187 / NBRC 110442 / TA 4).